The following is a 369-amino-acid chain: Chaperone protein DnaJ (369 aa).

The J domain maps to 3–67 (DHYEVLGVER…QQRQQYDRGG (65 aa)). The segment at 123–205 (GAHRDLEVDT…CQGQGRVRAR (83 aa)) adopts a CR-type zinc-finger fold. Residues Cys136, Cys139, Cys153, Cys156, Cys179, Cys182, Cys193, and Cys196 each contribute to the Zn(2+) site. CXXCXGXG motif repeat units lie at residues 136–143 (CETCDGSC), 153–160 (CDICHGTG), 179–186 (CGSCRGYG), and 193–200 (CVTCQGQG).

This sequence belongs to the DnaJ family. As to quaternary structure, homodimer. It depends on Zn(2+) as a cofactor.

It is found in the cytoplasm. Its function is as follows. Participates actively in the response to hyperosmotic and heat shock by preventing the aggregation of stress-denatured proteins and by disaggregating proteins, also in an autonomous, DnaK-independent fashion. Unfolded proteins bind initially to DnaJ; upon interaction with the DnaJ-bound protein, DnaK hydrolyzes its bound ATP, resulting in the formation of a stable complex. GrpE releases ADP from DnaK; ATP binding to DnaK triggers the release of the substrate protein, thus completing the reaction cycle. Several rounds of ATP-dependent interactions between DnaJ, DnaK and GrpE are required for fully efficient folding. Also involved, together with DnaK and GrpE, in the DNA replication of plasmids through activation of initiation proteins. The polypeptide is Chaperone protein DnaJ (Leifsonia xyli subsp. xyli (strain CTCB07)).